The sequence spans 438 residues: Putative B3 domain-containing protein Os04g0676650 (438 aa).

Low complexity predominate over residues 1 to 11 (MADARGSSSSS). Disordered stretches follow at residues 1–30 (MADA…DFVG) and 225–285 (SSSH…MNQN). The span at 12 to 30 (GDGGGGEGKGGAGHGDFVG) shows a compositional bias: gly residues. Residues 258–269 (RRSDMESEKNDD) are compositionally biased toward basic and acidic residues. The span at 272–285 (DQTPVSEPPSMNQN) shows a compositional bias: polar residues. The TF-B3 DNA-binding region spans 302-404 (LRKELTNSDV…KFVVRGEKAI (103 aa)).

Its subcellular location is the nucleus. In Oryza sativa subsp. japonica (Rice), this protein is Putative B3 domain-containing protein Os04g0676650.